The following is a 156-amino-acid chain: Ribosomal RNA large subunit methyltransferase H (156 aa).

Residues Leu-73, Gly-104, and 123–128 (IGPLTL) contribute to the S-adenosyl-L-methionine site.

The protein belongs to the RNA methyltransferase RlmH family. As to quaternary structure, homodimer.

The protein localises to the cytoplasm. The catalysed reaction is pseudouridine(1915) in 23S rRNA + S-adenosyl-L-methionine = N(3)-methylpseudouridine(1915) in 23S rRNA + S-adenosyl-L-homocysteine + H(+). Specifically methylates the pseudouridine at position 1915 (m3Psi1915) in 23S rRNA. This chain is Ribosomal RNA large subunit methyltransferase H, found in Xanthomonas oryzae pv. oryzae (strain MAFF 311018).